A 226-amino-acid polypeptide reads, in one-letter code: Probable chemoreceptor glutamine deamidase CheD (226 aa).

It belongs to the CheD family.

The catalysed reaction is L-glutaminyl-[protein] + H2O = L-glutamyl-[protein] + NH4(+). In terms of biological role, probably deamidates glutamine residues to glutamate on methyl-accepting chemotaxis receptors (MCPs), playing an important role in chemotaxis. The chain is Probable chemoreceptor glutamine deamidase CheD from Bordetella avium (strain 197N).